Here is a 72-residue protein sequence, read N- to C-terminus: Beta-defensin 104 (72 aa).

The first 22 residues, 1 to 22 (MQRLVLLLAISLLLYQDLPVRS), serve as a signal peptide directing secretion. 3 cysteine pairs are disulfide-bonded: Cys-30/Cys-57, Cys-37/Cys-51, and Cys-41/Cys-58.

Belongs to the beta-defensin family. High expression in the testis. Gastric antrum exhibited relatively high levels. A lower expression is observed in uterus and neutrophils thyroid gland, lung, and kidney. No detectable expression in other tissues tested.

Its subcellular location is the secreted. Its function is as follows. Has antimicrobial activity. Synergistic effects with lysozyme and DEFB103. The protein is Beta-defensin 104 (DEFB104A) of Homo sapiens (Human).